The chain runs to 132 residues: Small ribosomal subunit protein uS8 (132 aa).

Belongs to the universal ribosomal protein uS8 family. As to quaternary structure, part of the 30S ribosomal subunit. Contacts proteins S5 and S12.

Functionally, one of the primary rRNA binding proteins, it binds directly to 16S rRNA central domain where it helps coordinate assembly of the platform of the 30S subunit. The protein is Small ribosomal subunit protein uS8 of Syntrophotalea carbinolica (strain DSM 2380 / NBRC 103641 / GraBd1) (Pelobacter carbinolicus).